The following is a 212-amino-acid chain: Riboflavin synthase (212 aa).

Lumazine-binding repeat units lie at residues 1–97 and 98–195; these read MFTG…VGGH and LVSG…VDSV. 2,4-dihydroxypteridine contacts are provided by residues 4 to 6, 48 to 50, 62 to 67, 101 to 103, K137, 146 to 148, and 160 to 165; these read GIV, CLT, DIVEET, GHI, SLT, and FLIPET.

In terms of assembly, homotrimer.

The enzyme catalyses 2 6,7-dimethyl-8-(1-D-ribityl)lumazine + H(+) = 5-amino-6-(D-ribitylamino)uracil + riboflavin. The protein operates within cofactor biosynthesis; riboflavin biosynthesis; riboflavin from 2-hydroxy-3-oxobutyl phosphate and 5-amino-6-(D-ribitylamino)uracil: step 2/2. Functionally, catalyzes the dismutation of two molecules of 6,7-dimethyl-8-ribityllumazine, resulting in the formation of riboflavin and 5-amino-6-(D-ribitylamino)uracil. The chain is Riboflavin synthase (ribE) from Buchnera aphidicola subsp. Baizongia pistaciae (strain Bp).